The following is a 264-amino-acid chain: Small ribosomal subunit protein uS2 (264 aa).

This sequence belongs to the universal ribosomal protein uS2 family.

This is Small ribosomal subunit protein uS2 from Helicobacter pylori (strain P12).